Consider the following 1215-residue polypeptide: Pesticidal crystal protein Cry1Ka (1215 aa).

It belongs to the delta endotoxin family.

In terms of biological role, promotes colloidosmotic lysis by binding to the midgut epithelial cells of insects. Selectively toxic to Artogeia rapae but not active on Plutella xylostella. The protein is Pesticidal crystal protein Cry1Ka (cry1Ka) of Bacillus thuringiensis subsp. morrisoni.